Consider the following 315-residue polypeptide: WD repeat domain-containing protein 83 (315 aa).

WD repeat units lie at residues cysteine 23–threonine 62, glycine 65–lysine 104, glycine 107–isoleucine 146, glutamate 151–aspartate 188, tyrosine 189–glutamate 228, valine 233–lysine 272, and valine 275–asparagine 313.

Belongs to the WD repeat MORG1 family.

The protein resides in the cytoplasm. Its function is as follows. Molecular scaffold protein for various multimeric protein complexes. Acts as a module in the assembly of a multicomponent scaffold for the ERK pathway, linking ERK responses to specific agonists. Also involved in response to hypoxia by acting as a negative regulator of HIF1A/HIF-1-alpha. This is WD repeat domain-containing protein 83 (wdr83) from Danio rerio (Zebrafish).